A 334-amino-acid polypeptide reads, in one-letter code: Thiamine-binding periplasmic protein (334 aa).

The first 23 residues, 1–23 (MRLLSLLTFSLFAVIGLAPAAQA), serve as a signal peptide directing secretion. Residues 64-65 (DG), 166-167 (AT), tryptophan 202, and 220-223 (YTTS) contribute to the thiamine site.

This sequence belongs to the bacterial solute-binding protein 1 family. The complex is composed of two ATP-binding proteins (ThiQ), two transmembrane proteins (ThiP) and a solute-binding protein (ThiB).

Its subcellular location is the periplasm. In terms of biological role, part of the ABC transporter complex ThiBPQ involved in thiamine import. This is Thiamine-binding periplasmic protein (thiB) from Brucella abortus biovar 1 (strain 9-941).